Reading from the N-terminus, the 135-residue chain is Putative pre-16S rRNA nuclease (135 aa).

The protein belongs to the YqgF nuclease family.

It is found in the cytoplasm. Functionally, could be a nuclease involved in processing of the 5'-end of pre-16S rRNA. This is Putative pre-16S rRNA nuclease from Thermus thermophilus (strain ATCC 27634 / DSM 579 / HB8).